We begin with the raw amino-acid sequence, 146 residues long: 3-dehydroquinate dehydratase (146 aa).

Tyr23 (proton acceptor) is an active-site residue. Positions 74, 80, and 87 each coordinate substrate. Catalysis depends on His100, which acts as the Proton donor. Residues 101-102 (IS) and Arg111 contribute to the substrate site.

The protein belongs to the type-II 3-dehydroquinase family. In terms of assembly, homododecamer.

The enzyme catalyses 3-dehydroquinate = 3-dehydroshikimate + H2O. The protein operates within metabolic intermediate biosynthesis; chorismate biosynthesis; chorismate from D-erythrose 4-phosphate and phosphoenolpyruvate: step 3/7. Functionally, catalyzes a trans-dehydration via an enolate intermediate. This chain is 3-dehydroquinate dehydratase, found in Bacillus cereus (strain ATCC 10987 / NRS 248).